A 199-amino-acid polypeptide reads, in one-letter code: Charged multivesicular body protein 1b (199 aa).

Coiled-coil stretches lie at residues 8–42 (LFNLKFAAKELNRNAKKCEKEEKTEKAKIKKAIQK) and 178–199 (TSVASTEQDELSQRLARLRDQV). The segment at 167-199 (ELPQGQTGSVGTSVASTEQDELSQRLARLRDQV) is disordered. Residues 170 to 183 (QGQTGSVGTSVAST) show a composition bias toward polar residues. Residues 186-196 (DELSQRLARLR) carry the MIT-interacting motif motif.

It belongs to the SNF7 family. Probable peripherally associated component of the endosomal sorting required for transport complex III (ESCRT-III).

It is found in the cytoplasm. Its subcellular location is the cytosol. The protein resides in the endosome. It localises to the late endosome membrane. Functionally, probable peripherally associated component of the endosomal sorting required for transport complex III (ESCRT-III) which is involved in multivesicular bodies (MVBs) formation and sorting of endosomal cargo proteins into MVBs. MVBs contain intraluminal vesicles (ILVs) that are generated by invagination and scission from the limiting membrane of the endosome and mostly are delivered to lysosomes enabling degradation of membrane proteins, such as stimulated growth factor receptors, lysosomal enzymes and lipids. In Xenopus laevis (African clawed frog), this protein is Charged multivesicular body protein 1b (chmp1b).